The following is a 145-amino-acid chain: Ribosome maturation factor RimP (145 aa).

Belongs to the RimP family.

It localises to the cytoplasm. Required for maturation of 30S ribosomal subunits. In Borreliella burgdorferi (strain ZS7) (Borrelia burgdorferi), this protein is Ribosome maturation factor RimP.